Reading from the N-terminus, the 202-residue chain is FMN-dependent NADH:quinone oxidoreductase 2 (202 aa).

Residues S9, 15–17 (SAS), 95–98 (MYNF), and 139–142 (TAGG) each bind FMN.

This sequence belongs to the azoreductase type 1 family. In terms of assembly, homodimer. FMN serves as cofactor.

The catalysed reaction is 2 a quinone + NADH + H(+) = 2 a 1,4-benzosemiquinone + NAD(+). It catalyses the reaction N,N-dimethyl-1,4-phenylenediamine + anthranilate + 2 NAD(+) = 2-(4-dimethylaminophenyl)diazenylbenzoate + 2 NADH + 2 H(+). Its function is as follows. Quinone reductase that provides resistance to thiol-specific stress caused by electrophilic quinones. Reduces both benzoquinones and naphthoquinones efficiently. Functionally, also exhibits azoreductase activity. Catalyzes the reductive cleavage of the azo bond in aromatic azo compounds to the corresponding amines. Preferred substrates are the large bis-azo dye Ponceau BS, amaranth and tropaeolin O. In Pseudomonas aeruginosa (strain ATCC 15692 / DSM 22644 / CIP 104116 / JCM 14847 / LMG 12228 / 1C / PRS 101 / PAO1), this protein is FMN-dependent NADH:quinone oxidoreductase 2.